The primary structure comprises 240 residues: 4-hydroxy-tetrahydrodipicolinate reductase (240 aa).

NAD(+) is bound by residues Ala-79–Thr-81 and Ser-103–Met-106. His-135 functions as the Proton donor/acceptor in the catalytic mechanism. A (S)-2,3,4,5-tetrahydrodipicolinate-binding site is contributed by His-136. Lys-139 functions as the Proton donor in the catalytic mechanism. Position 145–146 (Gly-145–Thr-146) interacts with (S)-2,3,4,5-tetrahydrodipicolinate.

It belongs to the DapB family.

It localises to the cytoplasm. It catalyses the reaction (S)-2,3,4,5-tetrahydrodipicolinate + NAD(+) + H2O = (2S,4S)-4-hydroxy-2,3,4,5-tetrahydrodipicolinate + NADH + H(+). It carries out the reaction (S)-2,3,4,5-tetrahydrodipicolinate + NADP(+) + H2O = (2S,4S)-4-hydroxy-2,3,4,5-tetrahydrodipicolinate + NADPH + H(+). The protein operates within amino-acid biosynthesis; L-lysine biosynthesis via DAP pathway; (S)-tetrahydrodipicolinate from L-aspartate: step 4/4. Functionally, catalyzes the conversion of 4-hydroxy-tetrahydrodipicolinate (HTPA) to tetrahydrodipicolinate. This Staphylococcus epidermidis (strain ATCC 12228 / FDA PCI 1200) protein is 4-hydroxy-tetrahydrodipicolinate reductase.